The sequence spans 111 residues: Probable 4-amino-4-deoxy-L-arabinose-phosphoundecaprenol flippase subunit ArnE (111 aa).

The Cytoplasmic segment spans residues 1 to 35 (MIWLTLVFASLLSVAGQLCQKQATCFAAVNKRRKH). A helical membrane pass occupies residues 36–56 (IVLWLGLALACLGLAMVLWLL). The 70-residue stretch at 40–109 (LGLALACLGL…IIGGIVILGS (70 aa)) folds into the EamA domain. The Periplasmic segment spans residues 57 to 60 (VLQN). A helical membrane pass occupies residues 61–81 (VPVGIAYPMLSLNFVWVTLAA). At 82–87 (VKLWHE) the chain is on the cytoplasmic side. The helical transmembrane segment at 88–108 (PVSLRHWCGVAFIIGGIVILG) threads the bilayer. The Periplasmic portion of the chain corresponds to 109–111 (STV).

The protein belongs to the ArnE family. In terms of assembly, heterodimer of ArnE and ArnF.

It localises to the cell inner membrane. It participates in bacterial outer membrane biogenesis; lipopolysaccharide biosynthesis. In terms of biological role, translocates 4-amino-4-deoxy-L-arabinose-phosphoundecaprenol (alpha-L-Ara4N-phosphoundecaprenol) from the cytoplasmic to the periplasmic side of the inner membrane. The protein is Probable 4-amino-4-deoxy-L-arabinose-phosphoundecaprenol flippase subunit ArnE of Escherichia coli (strain UTI89 / UPEC).